Here is a 199-residue protein sequence, read N- to C-terminus: Transgelin-3 (199 aa).

Residues 24–136 (ADLENKLVDW…RTLMALGSVA (113 aa)) form the Calponin-homology (CH) domain. Serine 163 carries the phosphoserine modification. A Calponin-like repeat occupies 174 to 199 (IGLQMGSNKGASQAGMTGYGMPRQIM). A compositionally biased stretch (polar residues) spans 178–188 (MGSNKGASQAG). The segment at 178–199 (MGSNKGASQAGMTGYGMPRQIM) is disordered.

This sequence belongs to the calponin family.

This is Transgelin-3 (Tagln3) from Mus musculus (Mouse).